The following is a 484-amino-acid chain: MALTQRLEFRQSQSLVMSPQLMQAIKLLQLSNLDLMTFVEEELECNPLLERASDDAAGAEAPTEVDQVSGDQLAEAQVRDARDGAMTTYTEWGGGGSGDEDYNLEAFVASETTLSDHLAEQLSVAFTAPAQRMIGQYLIDLVDEAGYLPPDLGQAAERLGATQEDVEHVLAVLQEFDPPGVCARNLRECLAIQLRELDRYDPAMQALVEHLDLLAKRDIASLRKLCGVDDEDIADMIDELRRLSPKPGMKFGSARLQTMVPDVYVRPAPDGGWHVELNSDTLPRVLVNQTYYSKLSKKIGKDVDKSYFNDALQNATWLVRALDQRARTILKVATEIVRQQDGFFTLGVAHLRPLNLKAVAEAIQMHESTVSRVTANKYMATNRGTFELKYFFTASIPSADGGEAHSAEAVRHRIKQLIESEEPSAVLSDDAIVERLRVSGIDIARRTVAKYREAMRIRSSVQRRRDNMWSTMNSRASGGTGLDK.

A DNA-binding region (H-T-H motif) is located at residues 355–374; it reads NLKAVAEAIQMHESTVSRVT. The RPON box motif lies at 444–452; the sequence is ARRTVAKYR. The tract at residues 464–484 is disordered; that stretch reads RRDNMWSTMNSRASGGTGLDK. The span at 468–477 shows a compositional bias: polar residues; that stretch reads MWSTMNSRAS.

It belongs to the sigma-54 factor family.

In terms of biological role, sigma factors are initiation factors that promote the attachment of RNA polymerase to specific initiation sites and are then released. This sigma factor is responsible for the expression of the nitrogen fixation genes. This Bradyrhizobium diazoefficiens (strain JCM 10833 / BCRC 13528 / IAM 13628 / NBRC 14792 / USDA 110) protein is RNA polymerase sigma-54 factor 1 (rpoN1).